A 251-amino-acid chain; its full sequence is ATP synthase subunit a (251 aa).

The next 5 helical transmembrane spans lie at 28–48 (TDTVLSTAIAAAIVIALAFFL), 84–104 (IAPFVLPLAVTIFVFILISNW), 130–150 (INYVLALAFFVFVCYHLAGIW), 192–212 (IFAGGILVTLIALFPPYIMWA), and 220–240 (FDLFVGAIQAFIFSILTILYF).

The protein belongs to the ATPase A chain family. In terms of assembly, F-type ATPases have 2 components, CF(1) - the catalytic core - and CF(0) - the membrane proton channel. CF(1) has five subunits: alpha(3), beta(3), gamma(1), delta(1), epsilon(1). CF(0) has three main subunits: a(1), b(2) and c(9-12). The alpha and beta chains form an alternating ring which encloses part of the gamma chain. CF(1) is attached to CF(0) by a central stalk formed by the gamma and epsilon chains, while a peripheral stalk is formed by the delta and b chains.

It localises to the cell membrane. Functionally, key component of the proton channel; it plays a direct role in the translocation of protons across the membrane. This is ATP synthase subunit a from Mycobacterium leprae (strain TN).